The chain runs to 218 residues: Small ribosomal subunit protein uS3 (218 aa).

The KH type-2 domain occupies 38 to 106 (IREFISKRLS…RVHINILEIK (69 aa)).

Belongs to the universal ribosomal protein uS3 family. In terms of assembly, part of the 30S ribosomal subunit. Forms a tight complex with proteins S10 and S14.

Its function is as follows. Binds the lower part of the 30S subunit head. Binds mRNA in the 70S ribosome, positioning it for translation. This chain is Small ribosomal subunit protein uS3, found in Bacillus velezensis (strain DSM 23117 / BGSC 10A6 / LMG 26770 / FZB42) (Bacillus amyloliquefaciens subsp. plantarum).